Consider the following 541-residue polypeptide: Chaperonin GroEL (541 aa).

Residues 29-32, 86-90, Gly413, 476-478, and Asp492 each bind ATP; these read TLGP, DGTTT, and NAA. The disordered stretch occupies residues 521-541; the sequence is KPEENAPAAPAAPNPGMGGMM. Over residues 525 to 535 the composition is skewed to low complexity; that stretch reads NAPAAPAAPNP.

The protein belongs to the chaperonin (HSP60) family. As to quaternary structure, forms a cylinder of 14 subunits composed of two heptameric rings stacked back-to-back. Interacts with the co-chaperonin GroES.

It is found in the cytoplasm. The enzyme catalyses ATP + H2O + a folded polypeptide = ADP + phosphate + an unfolded polypeptide.. Its function is as follows. Together with its co-chaperonin GroES, plays an essential role in assisting protein folding. The GroEL-GroES system forms a nano-cage that allows encapsulation of the non-native substrate proteins and provides a physical environment optimized to promote and accelerate protein folding. The chain is Chaperonin GroEL from Lactiplantibacillus plantarum (strain ATCC BAA-793 / NCIMB 8826 / WCFS1) (Lactobacillus plantarum).